We begin with the raw amino-acid sequence, 280 residues long: Urease accessory protein UreD 1 (280 aa).

Belongs to the UreD family. In terms of assembly, ureD, UreF and UreG form a complex that acts as a GTP-hydrolysis-dependent molecular chaperone, activating the urease apoprotein by helping to assemble the nickel containing metallocenter of UreC. The UreE protein probably delivers the nickel.

It is found in the cytoplasm. Its function is as follows. Required for maturation of urease via the functional incorporation of the urease nickel metallocenter. This Bradyrhizobium sp. (strain BTAi1 / ATCC BAA-1182) protein is Urease accessory protein UreD 1.